An 86-amino-acid polypeptide reads, in one-letter code: MEFKIMSTTDKIEQKVIEMVAEKLNKDKSIITTDSRFIEDLKADSLDTVELMMAIEVEYGIDIPDDEATKIKTVSDVIQYIKERQS.

A Carrier domain is found at 10-85; that stretch reads DKIEQKVIEM…DVIQYIKERQ (76 aa). O-(pantetheine 4'-phosphoryl)serine is present on Ser-45.

The protein belongs to the acyl carrier protein (ACP) family. In terms of processing, 4'-phosphopantetheine is transferred from CoA to a specific serine of apo-ACP by AcpS. This modification is essential for activity because fatty acids are bound in thioester linkage to the sulfhydryl of the prosthetic group.

It is found in the cytoplasm. Its pathway is lipid metabolism; fatty acid biosynthesis. Functionally, carrier of the growing fatty acid chain in fatty acid biosynthesis. The chain is Acyl carrier protein from Rickettsia canadensis (strain McKiel).